Reading from the N-terminus, the 270-residue chain is Short chain dehydrogenase/reductase dpfgG (270 aa).

Positions 18, 69, 96, 130, 171, 200, and 204 each coordinate NADP(+). K171 functions as the Lowers pKa of active site Tyr in the catalytic mechanism.

The protein belongs to the short-chain dehydrogenases/reductases (SDR) family.

It functions in the pathway secondary metabolite biosynthesis; terpenoid biosynthesis. Functionally, short chain dehydrogenase/reductase; part of the gene cluster that mediates the biosynthesis of diterpenoid pyrones. The first step of the pathway is the synthesis of the alpha-pyrone moiety by the polyketide synthase dpfgA via condensation of one acetyl-CoA starter unit with 3 malonyl-CoA units and 2 methylations. The alpha-pyrone is then combined with geranylgeranyl pyrophosphate (GGPP) formed by the GGPP synthase dpfgD through the action of the prenyltransferase dpfgC to yield a linear alpha-pyrone diterpenoid. Subsequent steps in the diterpenoid pyrone biosynthetic pathway involve the decalin core formation, which is initiated by the epoxidation of the C10-C11 olefin by the FAD-dependent oxidoreductase dpfgE, and is followed by a cyclization cascade catalyzed by the terpene cyclase dpfgB. The short chain dehydrogenase/reductase dpfgG then oxidizes the 8S hydroxy group to a ketone and the short chain dehydrogenase/reductase dpfgH reduces the ketone to the 8R hydroxy group to yield higginsianin B. Higginsianin B is further methylated by the methyltransferase dpfgI to produce the intermediate named FDDP B. The cytochrome P450 monooxygenase dfgpJ then catalyzes a three-step oxidation at C-27 to generate a carboxylic acid as well as C-26 hydroxylation. Finally, methyltransferase dpfgK methylates the carboxylic acid generated by dpfgJ, yielding the final diterpenoid pyrones from the pathway which were named FDDP D and FDDP E. This is Short chain dehydrogenase/reductase dpfgG from Gibberella zeae (strain ATCC MYA-4620 / CBS 123657 / FGSC 9075 / NRRL 31084 / PH-1) (Wheat head blight fungus).